We begin with the raw amino-acid sequence, 147 residues long: Small ribosomal subunit protein eS19 (147 aa).

This sequence belongs to the eukaryotic ribosomal protein eS19 family. In terms of assembly, part of the 30S ribosomal subunit.

In terms of biological role, may be involved in maturation of the 30S ribosomal subunit. This is Small ribosomal subunit protein eS19 from Archaeoglobus fulgidus (strain ATCC 49558 / DSM 4304 / JCM 9628 / NBRC 100126 / VC-16).